The following is a 338-amino-acid chain: tRNA N6-adenosine threonylcarbamoyltransferase (338 aa).

Positions 111 and 115 each coordinate Fe cation. Residues 134–138 (LVSGG), aspartate 167, glycine 180, and asparagine 272 contribute to the substrate site. Aspartate 300 is a Fe cation binding site.

This sequence belongs to the KAE1 / TsaD family. It depends on Fe(2+) as a cofactor.

Its subcellular location is the cytoplasm. The enzyme catalyses L-threonylcarbamoyladenylate + adenosine(37) in tRNA = N(6)-L-threonylcarbamoyladenosine(37) in tRNA + AMP + H(+). Required for the formation of a threonylcarbamoyl group on adenosine at position 37 (t(6)A37) in tRNAs that read codons beginning with adenine. Is involved in the transfer of the threonylcarbamoyl moiety of threonylcarbamoyl-AMP (TC-AMP) to the N6 group of A37, together with TsaE and TsaB. TsaD likely plays a direct catalytic role in this reaction. The protein is tRNA N6-adenosine threonylcarbamoyltransferase of Shewanella oneidensis (strain ATCC 700550 / JCM 31522 / CIP 106686 / LMG 19005 / NCIMB 14063 / MR-1).